Here is a 285-residue protein sequence, read N- to C-terminus: Steroidogenic acute regulatory protein, mitochondrial (285 aa).

A mitochondrion-targeting transit peptide spans 1 to 63; it reads MLLATFKLCA…RRSSLLGSRL (63 aa). Ser-57 and Ser-195 each carry phosphoserine; by PKA. An START domain is found at 67–280; sequence LYSDQELAYL…LRKRLESHPA (214 aa).

In terms of assembly, may interact with TSPO. As to expression, expressed in gonads, adrenal cortex and kidney.

It is found in the mitochondrion. It catalyses the reaction cholesterol(in) = cholesterol(out). The protein operates within steroid metabolism; cholesterol metabolism. Its function is as follows. Plays a key role in steroid hormone synthesis by enhancing the metabolism of cholesterol into pregnenolone. Mediates the transfer of cholesterol from the outer mitochondrial membrane to the inner mitochondrial membrane where it is cleaved to pregnenolone. The sequence is that of Steroidogenic acute regulatory protein, mitochondrial (STAR) from Homo sapiens (Human).